The sequence spans 208 residues: MAKSSRSKTSKAWLKEHFNDPWVAKAQEQGYRSRASFKLLEMNEKDRLFRPGMAVLDLGAAPGGWSQVAGQLIGGRGTVIASDILAMDALPDVTFIEGDFREEVIYEQILMALGDQRADLVMSDMAPNMSGNSAVDQPRAMYLAELALDMAERVLEPDGVFLVKVFQGEGFEDYRKALQSRFKRVVSRKPAASRARSTEVYQLGFGLK.

5 residues coordinate S-adenosyl-L-methionine: Gly-63, Trp-65, Asp-83, Asp-99, and Asp-124. The active-site Proton acceptor is the Lys-164.

This sequence belongs to the class I-like SAM-binding methyltransferase superfamily. RNA methyltransferase RlmE family.

It is found in the cytoplasm. It catalyses the reaction uridine(2552) in 23S rRNA + S-adenosyl-L-methionine = 2'-O-methyluridine(2552) in 23S rRNA + S-adenosyl-L-homocysteine + H(+). Its function is as follows. Specifically methylates the uridine in position 2552 of 23S rRNA at the 2'-O position of the ribose in the fully assembled 50S ribosomal subunit. This is Ribosomal RNA large subunit methyltransferase E from Alcanivorax borkumensis (strain ATCC 700651 / DSM 11573 / NCIMB 13689 / SK2).